A 342-amino-acid chain; its full sequence is Glutamyl endopeptidase (342 aa).

Residues 1-29 (MKGKFLKVSSLFVATLTTATLVSSPAANA) form the signal peptide. Positions 30–68 (LSSKAMDNHPQQTQSSKQQTPKIKKGGNLKPLEQREHAN) are excised as a propeptide. The interval 33-63 (KAMDNHPQQTQSSKQQTPKIKKGGNLKPLEQ) is disordered. Residues 39-50 (PQQTQSSKQQTP) are compositionally biased toward low complexity. Catalysis depends on charge relay system residues His-119, Asp-161, and Ser-237. Residues 283–342 (FANDDQPNNPDNPDNPNNPDNPNNPDNPNNPDEPNNPDNPNNPDNPDNGDNNNSDNPDAA) are disordered. The segment covering 286–342 (DDQPNNPDNPDNPNNPDNPNNPDNPNNPDEPNNPDNPNNPDNPDNGDNNNSDNPDAA) has biased composition (low complexity). 13 tandem repeats follow at residues 289–291 (PNN), 292–294 (PDN), 295–297 (PDN), 298–300 (PNN), 301–303 (PDN), 304–306 (PNN), 307–309 (PDN), 310–312 (PNN), 316–318 (PNN), 319–321 (PDN), 322–324 (PNN), 325–327 (PDN), and 328–330 (PDN). The 13 X 3 AA repeats of P-[DN]-N stretch occupies residues 289–330 (PNNPDNPDNPNNPDNPNNPDNPNNPDEPNNPDNPNNPDNPDN).

Belongs to the peptidase S1B family. Post-translationally, proteolytically cleaved by aureolysin (aur). This cleavage leads to the activation of SspA.

It localises to the secreted. The catalysed reaction is Preferential cleavage: Glu-|-Xaa, Asp-|-Xaa.. Its function is as follows. Preferentially cleaves peptide bonds on the carboxyl-terminal side of aspartate and glutamate. Along with other extracellular proteases it is involved in colonization and infection of human tissues. Required for proteolytic maturation of thiol protease SspB and inactivation of SspC, an inhibitor of SspB. It is the most important protease for degradation of fibronectin-binding protein (FnBP) and surface protein A, which are involved in adherence to host cells. May also protect bacteria against host defense mechanism by cleaving the immunoglobulin classes IgG, IgA and IgM. May be involved in the stability of secreted lipases. The polypeptide is Glutamyl endopeptidase (sspA) (Staphylococcus aureus (strain Mu50 / ATCC 700699)).